We begin with the raw amino-acid sequence, 310 residues long: Peroxidase 44 (310 aa).

Residues 1-20 (MRSITALFFLFCFLAPSALA) form the signal peptide. Intrachain disulfides connect Cys31–Cys110, Cys64–Cys69, Cys116–Cys305, and Cys194–Cys218. The Proton acceptor role is filled by His62. Ca(2+)-binding residues include Asp63, Val66, Gly68, Asp70, and Ser72. Pro156 contacts substrate. His187 is a heme b binding site. Position 188 (Ser188) interacts with Ca(2+). Ca(2+)-binding residues include Asp229, Thr232, and Asp237.

It belongs to the peroxidase family. Classical plant (class III) peroxidase subfamily. Heme b serves as cofactor. Ca(2+) is required as a cofactor.

It localises to the secreted. It catalyses the reaction 2 a phenolic donor + H2O2 = 2 a phenolic radical donor + 2 H2O. Removal of H(2)O(2), oxidation of toxic reductants, biosynthesis and degradation of lignin, suberization, auxin catabolism, response to environmental stresses such as wounding, pathogen attack and oxidative stress. These functions might be dependent on each isozyme/isoform in each plant tissue. This Arabidopsis thaliana (Mouse-ear cress) protein is Peroxidase 44 (PER44).